The following is a 261-amino-acid chain: Histone H3-like centromeric protein cpar-1 (261 aa).

A disordered region spans residues 80–150 (TVGSNSTNLV…AGSSSSDRVR (71 aa)). The segment covering 113–127 (AANSHHQSPINVGNR) has biased composition (polar residues). Residues 132 to 146 (GTNGRNGSRAGSSSS) show a composition bias toward low complexity. The tract at residues 164-261 (YRPGQKALEE…LYRRLCLPNL (98 aa)) is H3-like.

This sequence belongs to the histone H3 family. As to quaternary structure, forms a nucleosome-like histone octamer containing two molecules each of H2A, H2B, cpar-1 and H4 assembled in one cpar-1-H4 heterotetramer and two H2A-H2B heterodimers. Post-translationally, cleaved at the onset of meiotic anaphase I, likely by separase sep-1.

It localises to the nucleus. The protein localises to the chromosome. In terms of biological role, histone H3-like variant which exclusively replaces conventional H3 in the nucleosome core of centromeric chromatin at the inner plate of the kinetochore. Required for recruitment and assembly of kinetochore proteins, mitotic progression and chromosome segregation. May serve as an epigenetic mark that propagates centromere identity through replication and cell division. Not required for chromosome segregation during meiosis. The polypeptide is Histone H3-like centromeric protein cpar-1 (Caenorhabditis elegans).